An 827-amino-acid chain; its full sequence is Periplasmic nitrate reductase (827 aa).

The segment at residues 1–32 is a signal peptide (tat-type signal); sequence MELNRRDFMKANAAAAAALAAGITLPVKNVYA. The 57-residue stretch at 37-93 folds into the 4Fe-4S Mo/W bis-MGD-type domain; that stretch reads IKWDKAPCRFCGTGCSVLVGTQNGRMVASQGDPDAEVNRGLNCIKGYFLPKIIYGKD. The [4Fe-4S] cluster site is built by C44, C47, C51, and C79. Residues K81, Q148, N173, C177, 210–217, 241–245, M371, Q375, N481, 507–508, K530, D557, and 717–726 contribute to the Mo-bis(molybdopterin guanine dinucleotide) site; these read WGSNMAEM, STFEH, SD, and TGRVLEHWHS. F793 provides a ligand contact to substrate. Mo-bis(molybdopterin guanine dinucleotide) is bound by residues N801 and K818.

The protein belongs to the prokaryotic molybdopterin-containing oxidoreductase family. NasA/NapA/NarB subfamily. Component of the periplasmic nitrate reductase NapAB complex composed of NapA and NapB. The cofactor is [4Fe-4S] cluster. Mo-bis(molybdopterin guanine dinucleotide) serves as cofactor. Predicted to be exported by the Tat system. The position of the signal peptide cleavage has not been experimentally proven.

Its subcellular location is the periplasm. The catalysed reaction is 2 Fe(II)-[cytochrome] + nitrate + 2 H(+) = 2 Fe(III)-[cytochrome] + nitrite + H2O. In terms of biological role, catalytic subunit of the periplasmic nitrate reductase complex NapAB. Receives electrons from NapB and catalyzes the reduction of nitrate to nitrite. The chain is Periplasmic nitrate reductase from Glaesserella parasuis serovar 5 (strain SH0165) (Haemophilus parasuis).